We begin with the raw amino-acid sequence, 539 residues long: MQLTELSIKNQNVFVQHYIDGKEEMSSFFDYSIHHKDMWRERLEDLSSRFFAREELAAYLTSYHNKFGSSAMQSAIEKLKDPSSAAVVGGQQAGLLTGPLYTIHKIISIIVLAKQQEKELQVPVIPIFWVAGEDHDLDEINFVHTSEENGPVKKKLPQSYWKKSSAASTSLDQEKCAAWIDDVFAAFEETDHTNTLLDNVKRCLRESVTFTDFFELLIADLFQEEGLVLLNSGDPGIKKLETAMFQKILRENDELARAVSDQQAFMRQAGYKPIIESGKEQANLFYEYEDERFLIEKDNGRFVIKELDLGWTRDELHTHMEEHPERFSNNVVTRPLMQEFLIPTLAFIAGPGEINYWGELKQAFAVMGFKMPPVMPRLNITILERHIEKKLAERNISLQDAIERGTENQRETYFERQIPEEFTAVMDQAKSQIEAIHKTVRQEALKVDQSLEPLLLKNAAFIQDQLQFLERTVMKRIEEKEGYVLKDYERIQNSIKPLLAPQERIWNIMYYLNRYGPKFFTTFKNLPFSFQNQHQVVKL.

Residues serine 146 and 384–386 (ERH) each bind ADP. The stretch at 455 to 475 (LLKNAAFIQDQLQFLERTVMK) forms a coiled coil. ADP contacts are provided by residues 490 to 493 (RIQN), tryptophan 506, and tyrosine 510.

It belongs to the BshC family. As to quaternary structure, homodimer in solution.

Involved in bacillithiol (BSH) biosynthesis. May catalyze the last step of the pathway, the addition of cysteine to glucosamine malate (GlcN-Mal) to generate BSH. This chain is Putative cysteine ligase BshC, found in Bacillus subtilis (strain 168).